The chain runs to 25 residues: Caerin-2.2 (25 aa).

Belongs to the frog skin active peptide (FSAP) family. Caerin subfamily. As to expression, expressed by the skin parotoid and/or rostral glands.

The protein localises to the secreted. Antimicrobial peptide, that adopts an alpha helical conformation which can disrupt bacterial membranes. Each caerin displays a different antimicrobial specificity. This is Caerin-2.2 from Ranoidea caerulea (Green tree frog).